Here is a 336-residue protein sequence, read N- to C-terminus: UDP-galactose transporter 1 (336 aa).

9 helical membrane passes run 11–31 (LAIL…KWIF), 38–58 (FPLS…YIVI), 83–103 (FVFC…PVSF), 131–151 (IWAS…TELS), 154–174 (MFGF…TILA), 193–213 (APFA…SGIL), 227–247 (IIIL…FYVI), 254–274 (TFNV…WLIF), and 278–298 (ISYM…FYGY).

Belongs to the TPT transporter family. TPT (TC 2.A.7.9) subfamily.

It localises to the membrane. In terms of biological role, nucleotide sugar transporter that specifically transports UDP-galactose. The protein is UDP-galactose transporter 1 of Arabidopsis thaliana (Mouse-ear cress).